The primary structure comprises 129 residues: Flagellar assembly factor FliW (129 aa).

It belongs to the FliW family. Interacts with translational regulator CsrA and flagellin(s).

It is found in the cytoplasm. In terms of biological role, acts as an anti-CsrA protein, binds CsrA and prevents it from repressing translation of its target genes, one of which is flagellin. Binds to flagellin and participates in the assembly of the flagellum. This Campylobacter jejuni subsp. doylei (strain ATCC BAA-1458 / RM4099 / 269.97) protein is Flagellar assembly factor FliW.